Reading from the N-terminus, the 170-residue chain is N-glycosidase R617 (170 aa).

This sequence belongs to the YbiA family.

The catalysed reaction is 2,5-diamino-6-hydroxy-4-(5-phosphoribosylamino)-pyrimidine + H2O = 2,5,6-triamino-4-hydroxypyrimidine + D-ribose 5-phosphate. It catalyses the reaction 5-amino-6-(5-phospho-D-ribosylamino)uracil + H2O = 5,6-diaminouracil + D-ribose 5-phosphate. In terms of biological role, catalyzes the hydrolysis of the N-glycosidic bond in the first two intermediates of riboflavin biosynthesis, which are highly reactive metabolites, yielding relatively innocuous products. Thus, can divert a surplus of harmful intermediates into relatively harmless products and pre-empt the damage these intermediates would otherwise do. May act on other substrates in vivo. This is N-glycosidase R617 from Acanthamoeba polyphaga mimivirus (APMV).